The primary structure comprises 301 residues: UDP-3-O-acyl-N-acetylglucosamine deacetylase (301 aa).

Zn(2+) contacts are provided by H75, H233, and D237. The active-site Proton donor is the H260.

It belongs to the LpxC family. Zn(2+) serves as cofactor.

It carries out the reaction a UDP-3-O-[(3R)-3-hydroxyacyl]-N-acetyl-alpha-D-glucosamine + H2O = a UDP-3-O-[(3R)-3-hydroxyacyl]-alpha-D-glucosamine + acetate. It functions in the pathway glycolipid biosynthesis; lipid IV(A) biosynthesis; lipid IV(A) from (3R)-3-hydroxytetradecanoyl-[acyl-carrier-protein] and UDP-N-acetyl-alpha-D-glucosamine: step 2/6. Functionally, catalyzes the hydrolysis of UDP-3-O-myristoyl-N-acetylglucosamine to form UDP-3-O-myristoylglucosamine and acetate, the committed step in lipid A biosynthesis. This is UDP-3-O-acyl-N-acetylglucosamine deacetylase from Aliarcobacter butzleri (strain RM4018) (Arcobacter butzleri).